A 447-amino-acid chain; its full sequence is Sporulation protein YpeB (447 aa).

The protein belongs to the YpeB family.

Its function is as follows. Required for spore cortex hydrolysis during germination. Appears to be required for either expression, localization, activation or function of SleB. In Oceanobacillus iheyensis (strain DSM 14371 / CIP 107618 / JCM 11309 / KCTC 3954 / HTE831), this protein is Sporulation protein YpeB.